Consider the following 311-residue polypeptide: Phospholipid phosphatase 3 (311 aa).

The Cytoplasmic portion of the chain corresponds to 1 to 33; sequence MQNYKYDKAIVPESKNGGSPALNNNPRRSGSKR. A Phosphoserine modification is found at Ser19. A helical membrane pass occupies residues 34 to 54; that stretch reads VLLICLDLFCLFMAGLPFLII. Residues 55–85 lie on the Extracellular side of the membrane; the sequence is ETSTIKPYHRGFYCNDESIKYPLKTGETIND. The chain crosses the membrane as a helical span at residues 86–106; it reads AVLCAVGIVIAILAIITGEFY. At 107–122 the chain is on the cytoplasmic side; sequence RIYYLKKSRSTIQNPY. Positions 109–110 match the Dityrosine basolateral targeting motif motif; the sequence is YY. Residues 123-143 form a helical membrane-spanning segment; the sequence is VAALYKQVGCFLFGCAISQSF. At 144–193 the chain is on the extracellular side; that stretch reads TDIAKVSIGRLRPHFLSVCNPDFSQINCSEGYIQNYRCRGDDSKVQEARK. The interval 148 to 156 is phosphatase sequence motif I; that stretch reads KVSIGRLRP. N-linked (GlcNAc...) asparagine glycosylation is present at Asn170. Positions 182 to 184 match the Integrin-binding motif motif; sequence RGD. Residues 194–214 traverse the membrane as a helical segment; the sequence is SFFSGHASFSMYTMLYLVLYL. Residues 196–199 form a phosphatase sequence motif II region; it reads FSGH. His199 functions as the Proton donors in the catalytic mechanism. Residues 215 to 225 lie on the Cytoplasmic side of the membrane; the sequence is QARFTWRGARL. A helical transmembrane segment spans residues 226-243; that stretch reads LRPLLQFTLIMMAFYTGL. The interval 244 to 255 is phosphatase sequence motif III; sequence SRVSDHKHHPSD. Residues 244 to 257 are Extracellular-facing; it reads SRVSDHKHHPSDVL. Residue His251 is the Nucleophile of the active site. A helical membrane pass occupies residues 258-278; that stretch reads AGFAQGALVACCIVFFVSDLF. The interval 275–311 is mediates interaction with CTNND1; the sequence is SDLFKTKTTLSLPAPAIRKEILSPVDIIDRNNHHNMM. Over 279-311 the chain is Cytoplasmic; sequence KTKTTLSLPAPAIRKEILSPVDIIDRNNHHNMM.

It belongs to the PA-phosphatase related phosphoesterase family. In terms of assembly, forms functional homodimers and homooligomers that are not required for substrate recognition and catalytic activity. Can also form heterooligomers with other PLPP2 and PLPP3. Interacts with CTNND1; negatively regulates the PLPP3-mediated stabilization of beta-catenin/CTNNB1. N-glycosylated. Contains high-mannose oligosaccharides. Ubiquitously expressed. Highly expressed in heart and placenta.

It is found in the cell membrane. The protein localises to the basolateral cell membrane. It localises to the endoplasmic reticulum membrane. The protein resides in the endoplasmic reticulum-Golgi intermediate compartment membrane. Its subcellular location is the golgi apparatus membrane. It is found in the golgi apparatus. The protein localises to the trans-Golgi network membrane. It localises to the membrane raft. The enzyme catalyses a 1,2-diacyl-sn-glycero-3-phosphate + H2O = a 1,2-diacyl-sn-glycerol + phosphate. It catalyses the reaction 1,2-dihexadecanoyl-sn-glycero-3-phosphate + H2O = 1,2-dihexadecanoyl-sn-glycerol + phosphate. The catalysed reaction is 1,2-di-(9Z-octadecenoyl)-sn-glycero-3-phosphate + H2O = 1,2-di-(9Z-octadecenoyl)-sn-glycerol + phosphate. It carries out the reaction a monoacyl-sn-glycero-3-phosphate + H2O = a monoacylglycerol + phosphate. The enzyme catalyses (9Z)-octadecenoyl-sn-glycero-3-phosphate + H2O = (9Z-octadecenoyl)-glycerol + phosphate. It catalyses the reaction sphing-4-enine 1-phosphate + H2O = sphing-4-enine + phosphate. The catalysed reaction is an N-acylsphing-4-enine 1-phosphate + H2O = an N-acylsphing-4-enine + phosphate. It carries out the reaction N-(octanoyl)-sphing-4-enine-1-phosphate + H2O = N-octanoylsphing-4-enine + phosphate. The enzyme catalyses N-(9Z-octadecenoyl)-ethanolamine phosphate + H2O = N-(9Z-octadecenoyl) ethanolamine + phosphate. Its pathway is lipid metabolism; phospholipid metabolism. Magnesium-independent phospholipid phosphatase. Insensitive to N-ethylmaleimide. Inhibited by sphingosine, zinc ions and modestly by propanolol. Its function is as follows. Magnesium-independent phospholipid phosphatase of the plasma membrane that catalyzes the dephosphorylation of a variety of glycerolipid and sphingolipid phosphate esters including phosphatidate/PA, lysophosphatidate/LPA, diacylglycerol pyrophosphate/DGPP, sphingosine 1-phosphate/S1P and ceramide 1-phosphate/C1P. Also acts on N-oleoyl ethanolamine phosphate/N-(9Z-octadecenoyl)-ethanolamine phosphate, a potential physiological compound. Has both an extracellular and an intracellular phosphatase activity, allowing the hydrolysis and the cellular uptake of these bioactive lipid mediators from the milieu, regulating signal transduction in different cellular processes. Through the dephosphorylation of extracellular sphingosine-1-phosphate and the regulation of its extra- and intracellular availability, plays a role in vascular homeostasis, regulating endothelial cell migration, adhesion, survival, proliferation and the production of pro-inflammatory cytokines. By maintaining the appropriate levels of this lipid in the cerebellum, also ensure its proper development and function. Through its intracellular lipid phosphatase activity may act in early compartments of the secretory pathway, regulating the formation of Golgi to endoplasmic reticulum retrograde transport carriers. Functionally, independently of this phosphatase activity may also function in the Wnt signaling pathway and the stabilization of beta-catenin/CTNNB1, thereby regulating cell proliferation, migration and differentiation in angiogenesis or yet in tumor growth. Also plays a role in integrin-mediated cell-cell adhesion in angiogenesis. In Homo sapiens (Human), this protein is Phospholipid phosphatase 3.